The primary structure comprises 963 residues: MPVARPQAAGPDRISLFLVAFLLGSPAAAQAEDGGPEGEMHPSTAYLLPSASLESSLEEGVTSAAPGLLPSQEALEAMEESLPPALPDEASVQHTPALRKGLPSLKQLNSARRQLRPLATPTTLQRLGSPASATTKLREPEDPEQPTAPAPLQIAPFTALATTLPHSPQPAQAPDDSSPGSPLDKGDNELTGSASEESQETTTSTIVTTTIITTEQAPALCGVSFSDPEGYIDSSDFPPQPYSSFLECTYNVTVYTGYGVELQVKSVNLSEGELLSIRGVDGPTLTVLANQTLLVEGQVIRSPTNTISVYFRTFQDDGLGTFQLHYQAFMLSCPFPRRPDAGEVTVMDLHSGGVAHFHCHLGYELQGAKTLTCINASKPHWSSQEPVCSAPCGGAVHNATIGRVLSPSFPGTANGSQLCVWTIEAPEGQKLHLHLERLLLHEKDRMIVYSGRTNTSALLYDSLRTESVPFEGLLSEGSSIRIEFTSDQGQAASAFNIRFEAFEKGHCYEPYIQNGNFTTSDPTYNIGTIVEFTCDPGHSLEQGPAVIECVNVRDPYWNDTEPLCRAMCGGELSAVAGVVLSPNWPEPYAEGEDCVWKIHVGEEKRIFLDIQFLNLSNSDILTIYDGDEVVPHVLGQYFGHSSPQKLYSSTPDLTIQFHSDPAGLIFGKGQGFIMNYIEVSRNDSCSDLPEIQNGWKTTSHTELVRGARITYQCDPGYDIVGSDTLTCQWDLSWSSDPPFCEKIMYCTDPGEVEHSTRLISDPVLLVGTTIQYTCSPGFVLEGSSLLTCYSRETGTPIWTSRLPHCVSEESLACDNPGLPENGYQILYKRLYLPGESLTFMCYEGFELMGEVTIRCILGQPSHWSGPLPICKVNQDSFEHALEAEAAAESSLEGGNMALAIFIPVLLISLLLGGAYIYVTRCRQYSSLRLPLMYSHPYSQITVETEFDNPIYETGETREYEVSI.

The signal sequence occupies residues 1–31 (MPVARPQAAGPDRISLFLVAFLLGSPAAAQA). 3 disordered regions span residues 28 to 63 (AAQA…GVTS), 116 to 150 (RPLA…TAPA), and 164 to 204 (LPHS…TTTS). The Extracellular portion of the chain corresponds to 32 to 897 (EDGGPEGEMH…ESSLEGGNMA (866 aa)). Residues 47–59 (LLPSASLESSLEE) show a composition bias toward low complexity. Residues 120–135 (TPTTLQRLGSPASATT) are compositionally biased toward polar residues. A compositionally biased stretch (low complexity) spans 191–204 (TGSASEESQETTTS). Cys-221 and Cys-248 are oxidised to a cystine. The region spanning 221 to 329 (CGVSFSDPEG…GTFQLHYQAF (109 aa)) is the CUB 1 domain. 3 N-linked (GlcNAc...) asparagine glycosylation sites follow: Asn-251, Asn-268, and Asn-290. In terms of domain architecture, Sushi 1 spans 331–390 (LSCPFPRRPDAGEVTVMDLHSGGVAHFHCHLGYELQGAKTLTCINASKPHWSSQEPVCSA). Disulfide bonds link Cys-333/Cys-373, Cys-359/Cys-388, and Cys-392/Cys-419. N-linked (GlcNAc...) asparagine glycans are attached at residues Asn-375, Asn-398, Asn-414, Asn-454, Asn-516, and Asn-558. One can recognise a CUB 2 domain in the interval 392–502 (CGGAVHNATI…SAFNIRFEAF (111 aa)). The Sushi 2 domain maps to 505–566 (GHCYEPYIQN…WNDTEPLCRA (62 aa)). Disulfide bonds link Cys-507–Cys-549, Cys-534–Cys-564, and Cys-568–Cys-594. The CUB 3 domain maps to 568 to 679 (CGGELSAVAG…QGFIMNYIEV (112 aa)). Residues Asn-614 and Asn-682 are each glycosylated (N-linked (GlcNAc...) asparagine). Sushi domains lie at 683–742 (DSCS…FCEK), 744–807 (MYCT…HCVS), and 811–872 (LACD…ICKV). Disulfide bonds link Cys-685/Cys-727, Cys-713/Cys-740, Cys-746/Cys-788, Cys-774/Cys-805, Cys-813/Cys-855, and Cys-841/Cys-870. Residues 898 to 918 (LAIFIPVLLISLLLGGAYIYV) traverse the membrane as a helical segment. Residues 919 to 963 (TRCRQYSSLRLPLMYSHPYSQITVETEFDNPIYETGETREYEVSI) lie on the Cytoplasmic side of the membrane.

Belongs to the SEZ6 family. Expressed exclusively in the brain, predominantly in neurons. Wide expression in the gray matter of the brain with high levels in the olfactory bulb, anterior olfactory nuclei, hippocampal formation and cerebellar cortex. Detected diffusely and weakly in the white matter, such as the corpus callosum and cerebellar medulla. In the cerebellar cortex, intensely expressed in Purkinje cells and granule cells. Detected also in interneurons in the molecular layer.

It is found in the cell membrane. Its subcellular location is the endoplasmic reticulum membrane. Candidate tumor suppressor gene. May contribute to specialized endoplasmic reticulum functions in neurons. In Mus musculus (Mouse), this protein is Seizure 6-like protein (Sez6l).